We begin with the raw amino-acid sequence, 575 residues long: Glycosyltransferase family 92 protein At1g27200 (575 aa).

A helical transmembrane segment spans residues F22–S44. In terms of domain architecture, GT92 spans L293–K540.

It belongs to the glycosyltransferase 92 family.

The protein localises to the membrane. The chain is Glycosyltransferase family 92 protein At1g27200 from Arabidopsis thaliana (Mouse-ear cress).